We begin with the raw amino-acid sequence, 316 residues long: Probable metal transport system membrane protein TC_0342 (316 aa).

Transmembrane regions (helical) follow at residues 1 to 21, 39 to 59, 64 to 84, 94 to 114, 124 to 144, 171 to 191, 196 to 216, 226 to 246, 252 to 272, and 286 to 306; these read MFASISPYYGVSFFEFFIVFF, IQVIVFFAIAVSCSIIGTFLV, AMYANVVSHTILFGLVCACLF, QNLTIAAISTTLLTGASIHFI, ASTALVFSLLFSASLLLLVFL, FLVLLXNLGVSYCFFSSFICV, VFAFSLGIRVKLIDYLMMFLL, AVGVLMSLAFLLVPGLIAKLI, EMMGYSMIFGVLSALIAPALS, and SGLAVCLLLVFYIGTLATVFV.

The protein belongs to the ABC-3 integral membrane protein family.

The protein resides in the cell inner membrane. In terms of biological role, part of an ATP-driven transport system TC_0338/TC_0339/TC_0341/TC_0342 for a metal. This Chlamydia muridarum (strain MoPn / Nigg) protein is Probable metal transport system membrane protein TC_0342.